Here is a 695-residue protein sequence, read N- to C-terminus: Serotransferrin (695 aa).

The signal sequence occupies residues Met1–Ala19. Transferrin-like domains lie at Val25–Glu347 and Val361–Lys680. 2 disulfides stabilise this stretch: Cys28/Cys67 and Cys38/Cys58. Position 42 is a dimethylated arginine (Arg42). Fe(3+)-binding residues include Asp82 and Tyr114. 17 disulfides stabilise this stretch: Cys137–Cys213, Cys156–Cys350, Cys177–Cys193, Cys180–Cys196, Cys190–Cys198, Cys246–Cys260, Cys358–Cys612, Cys364–Cys396, Cys374–Cys387, Cys421–Cys690, Cys436–Cys653, Cys468–Cys539, Cys492–Cys681, Cys502–Cys516, Cys513–Cys522, Cys579–Cys593, and Cys631–Cys636. Residues Thr139, Arg143, Ala145, and Gly146 each coordinate hydrogencarbonate. Tyr207 contributes to the Fe(3+) binding site. His268 contributes to the Fe(3+) binding site. Ser389 carries the post-translational modification Phosphoserine. The Fe(3+) site is built by Asp411 and Tyr444. Hydrogencarbonate is bound by residues Thr470, Arg474, Ala476, and Gly477. The N-linked (GlcNAc...) asparagine glycan is linked to Asn509. Tyr533 serves as a coordination point for Fe(3+). Residue His601 coordinates Fe(3+). A Phosphoserine modification is found at Ser682.

This sequence belongs to the transferrin family. In terms of assembly, monomer. Part of a complex composed of SLC40A1/ferroportin, TF/transferrin and HEPH/hephaestin that transfers iron from cells to transferrin. Expressed by the liver and secreted in plasma.

It localises to the secreted. Transferrins are iron binding transport proteins which can bind two Fe(3+) ions in association with the binding of an anion, usually bicarbonate. It is responsible for the transport of iron from sites of absorption and heme degradation to those of storage and utilization. Serum transferrin may also have a further role in stimulating cell proliferation. The protein is Serotransferrin (TF) of Oryctolagus cuniculus (Rabbit).